The sequence spans 275 residues: NH(3)-dependent NAD(+) synthetase (275 aa).

An ATP-binding site is contributed by 46-53 (GISGGQDS). Aspartate 52 lines the Mg(2+) pocket. Residue arginine 140 participates in deamido-NAD(+) binding. Threonine 160 is a binding site for ATP. Mg(2+) is bound at residue glutamate 165. Lysine 173 and aspartate 180 together coordinate deamido-NAD(+). ATP contacts are provided by lysine 189 and threonine 211. 260–261 (HK) is a binding site for deamido-NAD(+).

Belongs to the NAD synthetase family. As to quaternary structure, homodimer.

The catalysed reaction is deamido-NAD(+) + NH4(+) + ATP = AMP + diphosphate + NAD(+) + H(+). The protein operates within cofactor biosynthesis; NAD(+) biosynthesis; NAD(+) from deamido-NAD(+) (ammonia route): step 1/1. In terms of biological role, catalyzes the ATP-dependent amidation of deamido-NAD to form NAD. Uses ammonia as a nitrogen source. The chain is NH(3)-dependent NAD(+) synthetase from Salmonella heidelberg (strain SL476).